The following is a 1048-amino-acid chain: Histone deacetylase complex subunit SAP130 (1048 aa).

Residues Met1–Pro95 are disordered. Positions Thr40–Ser54 are enriched in polar residues. The segment covering Glu67 to Met80 has biased composition (basic and acidic residues). Arg232 is subject to Omega-N-methylarginine. Position 355 is a phosphothreonine (Thr355). A phosphoserine mark is found at Ser442 and Ser465. Disordered stretches follow at residues Pro458 to Asn477, Ile576 to Lys617, and Gln649 to His687. Composition is skewed to polar residues over residues Gly590–Gln613 and Gln649–Arg667. Lys785 is covalently cross-linked (Glycyl lysine isopeptide (Lys-Gly) (interchain with G-Cter in SUMO2)). Positions Leu819–Glu871 are disordered. Residues Pro836–Lys1047 form an interactions with SIN3A and HDAC1 region. Ser855 bears the Phosphoserine mark. Phosphothreonine is present on Thr856. Residues Lys864 and Lys869 each participate in a glycyl lysine isopeptide (Lys-Gly) (interchain with G-Cter in SUMO2) cross-link. At Ser875 the chain carries Phosphoserine.

It belongs to the SAP130 family. In terms of assembly, component of a mSin3A corepressor complex that contains SIN3A, SAP130, SUDS3/SAP45, ARID4B/SAP180, HDAC1 and HDAC2. Interacts (released by dead or dying cells) with CLEC4E. Acetylated. Post-translationally, sumoylated with SUMO1. Expressed in various cancer cell ines.

It localises to the nucleus. Acts as a transcriptional repressor. May function in the assembly and/or enzymatic activity of the mSin3A corepressor complex or in mediating interactions between the complex and other regulatory complexes. The protein is Histone deacetylase complex subunit SAP130 (SAP130) of Homo sapiens (Human).